A 137-amino-acid polypeptide reads, in one-letter code: Large ribosomal subunit protein uL16 (137 aa).

It belongs to the universal ribosomal protein uL16 family. In terms of assembly, part of the 50S ribosomal subunit.

In terms of biological role, binds 23S rRNA and is also seen to make contacts with the A and possibly P site tRNAs. In Xanthomonas axonopodis pv. citri (strain 306), this protein is Large ribosomal subunit protein uL16.